The following is an 884-amino-acid chain: Alanine--tRNA ligase (884 aa).

Residues histidine 565, histidine 569, cysteine 674, and histidine 678 each contribute to the Zn(2+) site.

Belongs to the class-II aminoacyl-tRNA synthetase family. Requires Zn(2+) as cofactor.

The protein localises to the cytoplasm. It carries out the reaction tRNA(Ala) + L-alanine + ATP = L-alanyl-tRNA(Ala) + AMP + diphosphate. Functionally, catalyzes the attachment of alanine to tRNA(Ala) in a two-step reaction: alanine is first activated by ATP to form Ala-AMP and then transferred to the acceptor end of tRNA(Ala). Also edits incorrectly charged Ser-tRNA(Ala) and Gly-tRNA(Ala) via its editing domain. This chain is Alanine--tRNA ligase, found in Xanthobacter autotrophicus (strain ATCC BAA-1158 / Py2).